The primary structure comprises 175 residues: ATP synthase subunit d, mitochondrial (175 aa).

Residue serine 2 is modified to N-acetylserine.

It belongs to the ATPase d subunit family.

The protein resides in the mitochondrion inner membrane. Mitochondrial membrane ATP synthase (F(1)F(0) ATP synthase or Complex V) produces ATP from ADP in the presence of a proton gradient across the membrane which is generated by electron transport complexes of the respiratory chain. F-type ATPases consist of two structural domains, F(1) - containing the extramembraneous catalytic core, and F(0) - containing the membrane proton channel, linked together by a central stalk and a peripheral stalk. During catalysis, ATP synthesis in the catalytic domain of F(1) is coupled via a rotary mechanism of the central stalk subunits to proton translocation. Part of the complex F(0) domain and the peripheric stalk, which acts as a stator to hold the catalytic alpha(3)beta(3) subcomplex and subunit a/ATP6 static relative to the rotary elements. This chain is ATP synthase subunit d, mitochondrial (atp7), found in Schizosaccharomyces pombe (strain 972 / ATCC 24843) (Fission yeast).